The chain runs to 1385 residues: Contactin-associated protein 1 (1385 aa).

Residues 1-20 (MMSLRLFSILLATVVSGAWG) form the signal peptide. At 21 to 1284 (WGYYGCNEEL…PYYHDDGWIA (1264 aa)) the chain is on the extracellular side. In terms of domain architecture, F5/8 type C spans 26-169 (CNEELVGPLY…IGLRLGIYGC (144 aa)). The cysteines at positions 26 and 169 are disulfide-linked. N121, N129, and N277 each carry an N-linked (GlcNAc...) asparagine glycan. 2 consecutive Laminin G-like domains span residues 204 to 356 (FKTE…AFRC) and 390 to 539 (FRTW…FDTC). C324 and C356 are oxidised to a cystine. N-linked (GlcNAc...) asparagine glycans are attached at residues N421, N500, and N519. 4 disulfides stabilise this stretch: C507-C539, C545-C556, C550-C565, and C567-C577. In terms of domain architecture, EGF-like 1 spans 545 to 577 (CSPNMCEHDGRCYQSWDDFICYCELTGYKGVTC). Residues 577-796 (CHEPLYKESC…NTISFHTGAA (220 aa)) form the Fibrinogen C-terminal domain. Residues N598, N654, N665, N764, N805, N844, N861, N949, and N957 are each glycosylated (N-linked (GlcNAc...) asparagine). Residues 814 to 958 (FRTSAPSGVF…NASEGTFPNC (145 aa)) enclose the Laminin G-like 3 domain. 4 disulfides stabilise this stretch: C931-C958, C962-C975, C969-C984, and C986-C996. In terms of domain architecture, EGF-like 2 spans 962–996 (CTHPRFPCFHGGRCVERYSYYTCDCDLTAFDGPYC). N-linked (GlcNAc...) asparagine glycosylation is found at N1079 and N1148. Positions 1089 to 1251 (FSTNSAPAVL…VQGELSESNC (163 aa)) constitute a Laminin G-like 4 domain. Cysteines 1210 and 1251 form a disulfide. A helical transmembrane segment spans residues 1285 to 1305 (ILLGFLVAFLLLGLVGMLVLF). At 1306-1385 (YLQNHRYKGS…PQILEESRSE (80 aa)) the chain is on the cytoplasmic side. The interval 1317-1385 (HTNEPKATHD…PQILEESRSE (69 aa)) is disordered. Residues 1319 to 1329 (NEPKATHDSHP) show a composition bias toward basic and acidic residues. Residues 1334–1367 (PLPPSGPAQAPAPTPAPTQLPTPAPAPAPAPASG) show a composition bias toward pro residues. Residues 1334–1370 (PLPPSGPAQAPAPTPAPTQLPTPAPAPAPAPASGPGP) carry the SH3-binding motif. S1384 is modified (phosphoserine).

This sequence belongs to the neurexin family. Interacts with CNTN1/contactin in cis form. Expressed in brain. In myelinated nerve fibers predominantly found in paranodal axoglial junctions. In the internodal region of myelinated axons in the CNS and the PNS also found as a thin line apposing the inner mesaxon of the myelin sheath. In PNS neurons this line forms a circumferential ring that apposes the innermost aspect of Schmidt-Lanterman incisures.

Its subcellular location is the membrane. The protein localises to the cell junction. It localises to the paranodal septate junction. Functionally, required, with CNTNAP2, for radial and longitudinal organization of myelinated axons. Plays a role in the formation of functional distinct domains critical for saltatory conduction of nerve impulses in myelinated nerve fibers. Demarcates the paranodal region of the axo-glial junction. In association with contactin involved in the signaling between axons and myelinating glial cells. This chain is Contactin-associated protein 1 (Cntnap1), found in Mus musculus (Mouse).